Consider the following 221-residue polypeptide: Putative adhesin P1-like protein MPN_131 (221 aa).

The segment covering 13 to 36 (RYGNNHRGSNSSTSGVTTQGQSQN) has biased composition (low complexity). 2 disordered regions span residues 13 to 51 (RYGN…NVGV) and 90 to 183 (GWRN…TPSG). Residues 37–48 (ASSNEPAPTFSN) are compositionally biased toward polar residues. Residues 130–139 (LKQDKADKSG) show a composition bias toward basic and acidic residues. Polar residues-rich tracts occupy residues 149-160 (SGDNLTNYTNLP) and 174-183 (HSPTRTTPSG).

The protein belongs to the adhesin P1 family.

The polypeptide is Putative adhesin P1-like protein MPN_131 (Mycoplasma pneumoniae (strain ATCC 29342 / M129 / Subtype 1) (Mycoplasmoides pneumoniae)).